The following is a 268-amino-acid chain: Ribosomal RNA small subunit methyltransferase A (268 aa).

The S-adenosyl-L-methionine site is built by Asn18, Leu20, Gly45, Glu66, Asp91, and Asn112.

The protein belongs to the class I-like SAM-binding methyltransferase superfamily. rRNA adenine N(6)-methyltransferase family. RsmA subfamily.

The protein localises to the cytoplasm. It carries out the reaction adenosine(1518)/adenosine(1519) in 16S rRNA + 4 S-adenosyl-L-methionine = N(6)-dimethyladenosine(1518)/N(6)-dimethyladenosine(1519) in 16S rRNA + 4 S-adenosyl-L-homocysteine + 4 H(+). Its function is as follows. Specifically dimethylates two adjacent adenosines (A1518 and A1519) in the loop of a conserved hairpin near the 3'-end of 16S rRNA in the 30S particle. May play a critical role in biogenesis of 30S subunits. This is Ribosomal RNA small subunit methyltransferase A from Shewanella oneidensis (strain ATCC 700550 / JCM 31522 / CIP 106686 / LMG 19005 / NCIMB 14063 / MR-1).